The primary structure comprises 437 residues: Eukaryotic peptide chain release factor subunit 1 (437 aa).

The NIKS motif; plays an important role in translational termination motif lies at 61-64; it reads NIKS.

Belongs to the eukaryotic release factor 1 family. As to quaternary structure, component of the eRF1-eRF3-GTP ternary complex, composed of ETF1/ERF1 and eRF3 (GSPT1/ERF3A or GSPT2/ERF3B) and GTP.

Its subcellular location is the cytoplasm. Its function is as follows. Component of the eRF1-eRF3-GTP ternary complex, a ternary complex that mediates translation termination in response to the termination codons. The eRF1-eRF3-GTP complex binds to a stop codon in the ribosomal A-site. ETF1/ERF1 is responsible for stop codon recognition and inducing hydrolysis of peptidyl-tRNA. Following GTP hydrolysis, eRF3 (GSPT1/ERF3A or GSPT2/ERF3B) dissociates, permitting ETF1/eRF1 to accommodate fully in the A-site, followed by hydrolysis of peptidyl-tRNA. This is Eukaryotic peptide chain release factor subunit 1 (etf1) from Xenopus laevis (African clawed frog).